The primary structure comprises 1373 residues: MAKASVELTRELQDSIRRCLSQGAVLQQHRVKLETKPKKFEDRVLALTSWRLHLFPLKVPAKVESSFNVLEIRAFNTLSQNQILVETERGVVSMRLPSAESVDQVTRHVSSALSKVCPGPGCLIRRGNADTPEGPRDTSPNSETSTSTTHSVCGGFSETYAALCDYNGLHCREEVQWDVDTIYHAEDNREFNLLDFSHLESRDLALMVAALAYNQWFTKLYCKDLRLGSEVLEQVLHTLSKSGSLEELVLDNAGLKTDFVQKLAGVFGENGSCVLHALTLSHNPIEDKGFLSLSQQLLCFPAGLTKLCLAKTAVSPRGLQALGQTFGANPAFASSLRYLDLSKNPGLLATDEANALYSFLAQPNALVHLDLSGTDCAVDLLLGALLHGCCSHLTYLNLARNSCSHRKGREAPPAFKQFFSSAYTLSHVNLSATRLPLEALRALLQGLSLNSHLSDLHLDLSSCELRSAGAQALQEQLGAVTCIGSLDLSDNGFDSDLLTLVPALGKNKSLKHLFLGKNFNVKAKTLEEILHKLVQLIQEEDCSLQSLSVADSRLKLRTSILINALGSNTCLAKVDLSGNGMEDIGAKMLSKALQINSSLRTILWDRNNTSALGFLDIARALESNHTLRFMSFPVSDISQAYRSAPERTEDVWQKIQWCLVRNNHSQTCPQEQAFRLQQGLVTSSAEQMLQRLCGRVQEEVRALRLCPLEPVQDELLYARDLIKDAKNSRALFPSLCELGHVLANDGPVRQRLESVASEVSKAVDKELQVILESMVSLTQELCPVAMRVAEGHNKMLSNVAERVTVPRNFIRGALLEQAGQDIQNKLDEVKLSVVTYLTNSIVDEILQELYHSHKSLARHLTQLRTLSDPPGGAGPGQDPSSRGRGRSHDHEETDDELGTNIDTMAIKKQKRCRKIRPVSAFISGSPQDMESQLGSLGIPPGWFSGLGSSQPTASGSWEGLSELPTHGYKLRHQTQGRPRPPRTTPPGPGRPSVPVPGPRQENGMATRLDEGLEDFFSRRVMDESSSYPRTLRTMRPGPSEPPLPALQKRRRRGLFHFRRPRSFKGDRGPGSPTAGLLLPPPPPPPPTQESPPSPDPPSLGNNSSPCWSPEEESSLLPGFGGARGSSFCRKMGTERLEAGDGAPAPGTAQPPRVHGVALPGLGRTKGWSFDGKREGTDPDQEDSTQAWQKRRSSDDAGPGAWKPPPPPQSSKPSFSAMRRAEATWHIAEESAPNHSCQSPSPASQDGEEEKDGALFPERMVPARNAKEPPIGPRPPKPVAVPRGRRAPQVPGGREEAESSSAAPGANKPWLRLGSQQDQEEPEGQVPSDLGRRTAPLKPKRTRRAQSCDKLEPDRRRPPDPAGVCAGTSEPGTD.

A disordered region spans residues 126–151; that stretch reads RGNADTPEGPRDTSPNSETSTSTTHS. The span at 138–151 shows a compositional bias: low complexity; sequence TSPNSETSTSTTHS. LRR repeat units lie at residues 242-269, 272-299, 333-358, 390-417, 422-446, 453-475, 480-507, 510-536, 541-564, and 568-591; these read SGSLEELVLDNAGLKTDFVQKLAGVFGE, SCVLHALTLSHNPIEDKGFLSLSQQLLC, ASSLRYLDLSKNPGLLATDEANALYS, CSHLTYLNLARNSCSHRKGREAPPAFKQ, AYTLSHVNLSATRLPLEALRALLQG, LSDLHLDLSSCELRSAGAQALQE, VTCIGSLDLSDNGFDSDLLTLVPALGKN, LKHLFLGKNFNVKAKTLEEILHKLVQL, DCSLQSLSVADSRLKLRTSILINA, and NTCLAKVDLSGNGMEDIGAKMLSK. Disordered stretches follow at residues 864-902 and 970-1373; these read RTLSDPPGGAGPGQDPSSRGRGRSHDHEETDDELGTNID and LRHQ…PGTD. A compositionally biased stretch (pro residues) spans 981–997; the sequence is PRTTPPGPGRPSVPVPG. Over residues 1007 to 1022 the composition is skewed to basic and acidic residues; that stretch reads RLDEGLEDFFSRRVMD. The span at 1047-1062 shows a compositional bias: basic residues; that stretch reads QKRRRRGLFHFRRPRS. Residues 1078–1097 show a composition bias toward pro residues; it reads LPPPPPPPPTQESPPSPDPP. Over residues 1098 to 1108 the composition is skewed to low complexity; that stretch reads SLGNNSSPCWS. A compositionally biased stretch (basic and acidic residues) spans 1218-1228; sequence RRAEATWHIAE. Over residues 1232–1243 the composition is skewed to polar residues; sequence PNHSCQSPSPAS. Pro residues predominate over residues 1269-1278; the sequence is PIGPRPPKPV. Over residues 1345–1358 the composition is skewed to basic and acidic residues; the sequence is QSCDKLEPDRRRPP.

This sequence belongs to the CARMIL family. As to expression, widely expressed, with much higher levels in fetal tissues than in adult ones. Highly expressed in newborn brain.

Its subcellular location is the cytoplasm. The protein resides in the cell membrane. This Rattus norvegicus (Rat) protein is Capping protein, Arp2/3 and myosin-I linker protein 3 (Carmil3).